The primary structure comprises 267 residues: 2-keto-3-deoxy-L-rhamnonate aldolase (267 aa).

Histidine 49 acts as the Proton acceptor in catalysis. A substrate-binding site is contributed by glutamine 151. Residue glutamate 153 coordinates Mg(2+). Substrate-binding residues include alanine 178 and aspartate 179. Aspartate 179 lines the Mg(2+) pocket.

Belongs to the HpcH/HpaI aldolase family. KDR aldolase subfamily. As to quaternary structure, homohexamer. Mg(2+) is required as a cofactor.

It catalyses the reaction 2-dehydro-3-deoxy-L-rhamnonate = (S)-lactaldehyde + pyruvate. Functionally, catalyzes the reversible retro-aldol cleavage of 2-keto-3-deoxy-L-rhamnonate (KDR) to pyruvate and lactaldehyde. The sequence is that of 2-keto-3-deoxy-L-rhamnonate aldolase from Escherichia coli O17:K52:H18 (strain UMN026 / ExPEC).